The chain runs to 835 residues: Leucine--tRNA ligase (835 aa).

Positions 36-46 (PYPSGKIHVGH) match the 'HIGH' region motif. The 'KMSKS' region motif lies at 602 to 606 (KMSKS). An ATP-binding site is contributed by Lys-605.

The protein belongs to the class-I aminoacyl-tRNA synthetase family.

The protein resides in the cytoplasm. The enzyme catalyses tRNA(Leu) + L-leucine + ATP = L-leucyl-tRNA(Leu) + AMP + diphosphate. The chain is Leucine--tRNA ligase from Rickettsia massiliae (strain Mtu5).